Here is a 1049-residue protein sequence, read N- to C-terminus: Self-sufficient cytochrome P450 monooxygenase CYP505E4 (1049 aa).

Residue Cys405 participates in heme binding. The tract at residues Ala462–Asp492 is disordered. Low complexity predominate over residues Ser471–Gly486. The region spanning Ile499–Leu640 is the Flavodoxin-like domain. Residues Ser505–Thr509 and Val584–Thr616 each bind FMN. In terms of domain architecture, FAD-binding FR-type spans Arg678–Pro906.

In the N-terminal section; belongs to the cytochrome P450 family. It depends on FAD as a cofactor. Requires FMN as cofactor. The cofactor is heme.

The catalysed reaction is 2 oxidized [cytochrome P450] + NADPH = 2 reduced [cytochrome P450] + NADP(+) + H(+). It carries out the reaction an organic molecule + reduced [NADPH--hemoprotein reductase] + O2 = an alcohol + oxidized [NADPH--hemoprotein reductase] + H2O + H(+). The enzyme catalyses dodecanoate + reduced [NADPH--hemoprotein reductase] + O2 = 5-hydroxydodecanoate + oxidized [NADPH--hemoprotein reductase] + H2O + H(+). It catalyses the reaction tetradecanoate + reduced [NADPH--hemoprotein reductase] + O2 = 7-hydroxytetradecanoate + oxidized [NADPH--hemoprotein reductase] + H2O + H(+). The catalysed reaction is dodecan-1-ol + reduced [NADPH--hemoprotein reductase] + O2 = 1,5-dodecanediol + oxidized [NADPH--hemoprotein reductase] + H2O + H(+). It carries out the reaction dodecan-1-ol + reduced [NADPH--hemoprotein reductase] + O2 = 1,4-dodecanediol + oxidized [NADPH--hemoprotein reductase] + H2O + H(+). The enzyme catalyses dodecan-1-ol + reduced [NADPH--hemoprotein reductase] + O2 = 1,6-dodecanediol + oxidized [NADPH--hemoprotein reductase] + H2O + H(+). Self-sufficient cytochrome P450 monooxygenase that catalyzes the regioselective in-chain hydroxylation of alkanes, fatty alcohols, and fatty acids at the omega-7 position. Performs hydroxylation of C10-C16 n-alkanes and C12 and C14 fatty alcohols; and thereby enables the one step biocatalytic synthesis of rare alcohols such as 5-dodecanol and 7-tetradecanol. Converts 1-dodecanol into 1,5-dodecanediol as major product with very little sub-terminally hydroxylated products with the 1,4-dodecanediol and 1,6-dodecanediol more abundant. Converts dodecanoic acid to 5-hydroxydodecanoic acid which can be further converted into delta-dodecalactone by lactonization of the 5-hydroxy acid at low pH. Also gives sub-terminal hydroxylation of dodecanoic acid with 9-hydroxydodecanoic acid being the second most abundant product. In Penicillium freii, this protein is Self-sufficient cytochrome P450 monooxygenase CYP505E4.